A 304-amino-acid polypeptide reads, in one-letter code: Putative integrase/recombinase HI_1414 (304 aa).

The region spanning 30–109 (TLFSDVIKRY…TIGHIFKIAL (80 aa)) is the Core-binding (CB) domain. A Tyr recombinase domain is found at 131 to 304 (PRTQRVTEEN…DMAEVAELLD (174 aa)). Active-site residues include Arg-174, Lys-199, His-256, Arg-259, and His-281. Catalysis depends on Tyr-291, which acts as the O-(3'-phospho-DNA)-tyrosine intermediate.

Belongs to the 'phage' integrase family.

This chain is Putative integrase/recombinase HI_1414, found in Haemophilus influenzae (strain ATCC 51907 / DSM 11121 / KW20 / Rd).